A 363-amino-acid chain; its full sequence is 3-isopropylmalate dehydrogenase (363 aa).

78 to 91 (GPKWEHLPPAEQPE) is a binding site for NAD(+). Substrate-binding residues include R99, R109, R138, and D227. Residues D227, D251, and D255 each coordinate Mg(2+). 285–297 (GSAPDIAGKDIAN) is an NAD(+) binding site.

It belongs to the isocitrate and isopropylmalate dehydrogenases family. LeuB type 1 subfamily. Homodimer. Mg(2+) serves as cofactor. Mn(2+) is required as a cofactor.

The protein localises to the cytoplasm. It catalyses the reaction (2R,3S)-3-isopropylmalate + NAD(+) = 4-methyl-2-oxopentanoate + CO2 + NADH. It participates in amino-acid biosynthesis; L-leucine biosynthesis; L-leucine from 3-methyl-2-oxobutanoate: step 3/4. In terms of biological role, catalyzes the oxidation of 3-carboxy-2-hydroxy-4-methylpentanoate (3-isopropylmalate) to 3-carboxy-4-methyl-2-oxopentanoate. The product decarboxylates to 4-methyl-2 oxopentanoate. This is 3-isopropylmalate dehydrogenase from Pectobacterium atrosepticum (strain SCRI 1043 / ATCC BAA-672) (Erwinia carotovora subsp. atroseptica).